The following is a 296-amino-acid chain: Polyamine aminopropyltransferase (296 aa).

The PABS domain maps to 16-251 (HLWYFEYYTG…GMWSYTFASK (236 aa)). Position 46 (Q46) interacts with S-methyl-5'-thioadenosine. Spermidine-binding residues include H77 and D101. Residues E121 and 152–153 (NG) contribute to the S-methyl-5'-thioadenosine site. The active-site Proton acceptor is the D170. Residue 170–173 (DSTD) coordinates spermidine.

The protein belongs to the spermidine/spermine synthase family. In terms of assembly, homodimer or homotetramer.

It localises to the cytoplasm. It catalyses the reaction S-adenosyl 3-(methylsulfanyl)propylamine + putrescine = S-methyl-5'-thioadenosine + spermidine + H(+). It functions in the pathway amine and polyamine biosynthesis; spermidine biosynthesis; spermidine from putrescine: step 1/1. Functionally, catalyzes the irreversible transfer of a propylamine group from the amino donor S-adenosylmethioninamine (decarboxy-AdoMet) to putrescine (1,4-diaminobutane) to yield spermidine. This is Polyamine aminopropyltransferase from Thermotoga neapolitana (strain ATCC 49049 / DSM 4359 / NBRC 107923 / NS-E).